Reading from the N-terminus, the 395-residue chain is Chalcone synthase (395 aa).

Residue Cys164 is part of the active site.

Belongs to the thiolase-like superfamily. Chalcone/stilbene synthases family.

The catalysed reaction is (E)-4-coumaroyl-CoA + 3 malonyl-CoA + 3 H(+) = 2',4,4',6'-tetrahydroxychalcone + 3 CO2 + 4 CoA. Its pathway is secondary metabolite biosynthesis; flavonoid biosynthesis. In terms of biological role, the primary product of this enzyme is 4,2',4',6'-tetrahydroxychalcone (also termed naringenin-chalcone or chalcone) which can under specific conditions spontaneously isomerize into naringenin. The chain is Chalcone synthase (CHS) from Betula pendula (European white birch).